The chain runs to 346 residues: Prepilin peptidase EppA (346 aa).

The next 10 helical transmembrane spans lie at 1 to 21, 31 to 51, 56 to 76, 77 to 97, 101 to 121, 128 to 148, 149 to 169, 182 to 202, 206 to 226, and 321 to 341; these read MFGF…LILT, IIPH…GYYF, AITS…GMGG, GDVK…IYFV, ISIL…TKIL, IIPS…ITEI, YSIG…IFIS, LGYI…AYFV, VLIS…VIYA, and PFVP…MGVI.

Belongs to the peptidase A24 family.

The protein localises to the cell membrane. In terms of biological role, peptidase that processes the N-terminus of prepilins. Specifically cleaves proteins with a class III (type IV pilin-like) signal sequence, such as the major structural pilin EpdE and the minor pilins EpdA, EpdC and EpdD. Is not able to cleave the preflagellin subunit FlaB2. This Methanococcus maripaludis (strain DSM 14266 / JCM 13030 / NBRC 101832 / S2 / LL) protein is Prepilin peptidase EppA.